The sequence spans 487 residues: MNKNKIIRTRYAPSPTGLFHIGGARTALFNYLFAKKNNGDFIVRIEDTDIDRNVENGIESQLLNLKWLKIFPDESPLNPGNYGPYIQTERLPIYKEKAEQLLKEKKAYRCFCTPEQLEKNRKKALKDGKTPKYNRTCLSLSEDQISEKIKNNIPFSLRFKITDNTEIKWNDIVRGEMCVPTSALTDPVILKSNGIPTYNFAVVIDDNDMLISHIIRGEEHLSNTPYQIAINEALDINKNIVFGHLSVIIDETGKKLSKRNMELKQFIEDYKNMGFSPEAIVNFMYLLGLSSSDNKEIFSLAEAVKNFDIKKVSKSPTTFDFKKMEWISSEHFKMMSDSAFISFAKPFITIDLGFLKGNENDVILLFKNQIAYAKQINDLIDETFFSPETFAAVCEKFPFLKQADTKELIKVFIKQLQELPNWNISEIATVIDAVKKQTGKSGKELFMPIRVYSSHNSHGPELAKVIFILGKDKVIKNAKSFLDNKGA.

The 'HIGH' region signature appears at 13–23; it reads PSPTGLFHIGG. Residues 255-259 carry the 'KMSKS' region motif; that stretch reads KLSKR. Lys-258 contacts ATP.

It belongs to the class-I aminoacyl-tRNA synthetase family. Glutamate--tRNA ligase type 1 subfamily. As to quaternary structure, monomer.

It is found in the cytoplasm. The enzyme catalyses tRNA(Glu) + L-glutamate + ATP = L-glutamyl-tRNA(Glu) + AMP + diphosphate. Catalyzes the attachment of glutamate to tRNA(Glu) in a two-step reaction: glutamate is first activated by ATP to form Glu-AMP and then transferred to the acceptor end of tRNA(Glu). The protein is Glutamate--tRNA ligase of Malacoplasma penetrans (strain HF-2) (Mycoplasma penetrans).